Reading from the N-terminus, the 79-residue chain is Sulfur carrier protein TusA (79 aa).

Cys17 (cysteine persulfide intermediate) is an active-site residue.

Belongs to the sulfur carrier protein TusA family.

It is found in the cytoplasm. Sulfur carrier protein which probably makes part of a sulfur-relay system. The chain is Sulfur carrier protein TusA from Histophilus somni (strain 129Pt) (Haemophilus somnus).